The primary structure comprises 507 residues: Maturase K (507 aa).

This sequence belongs to the intron maturase 2 family. MatK subfamily.

The protein localises to the plastid. Its subcellular location is the chloroplast. Usually encoded in the trnK tRNA gene intron. Probably assists in splicing its own and other chloroplast group II introns. The chain is Maturase K from Kalmia buxifolia (Sand myrtle).